A 281-amino-acid chain; its full sequence is Elongation factor 1-delta (281 aa).

An N-acetylalanine modification is found at alanine 2. An N6-acetyllysine modification is found at lysine 17. Residues serine 37, serine 44, serine 60, serine 86, and serine 106 each carry the phosphoserine modification. The tract at residues 80-115 is leucine-zipper; it reads LIVRIASLEVENQNLRGVVQDLQQAISKLEVRLSTL. Lysine 107 is subject to N6-acetyllysine. Positions 115–132 are enriched in polar residues; the sequence is LEKSSPTHRATAPQTQHV. The interval 115-172 is disordered; that stretch reads LEKSSPTHRATAPQTQHVSPMRQVEPPAKKGATPAEDDEDNDIDLFGSDEEEEDKEAA. Residue lysine 117 is modified to N6-acetyllysine; alternate. Lysine 117 carries the N6-succinyllysine; alternate modification. Serine 119 is modified (phosphoserine). Threonine 129 is modified (phosphothreonine). Serine 133 carries the phosphoserine modification. Threonine 147 bears the Phosphothreonine mark. Acidic residues predominate over residues 149–169; the sequence is AEDDEDNDIDLFGSDEEEEDK. Serine 162 bears the Phosphoserine; by CK2 mark. Residues 173–281 form a catalytic (GEF) region; the sequence is RLREERLRQY…SVDIAAFNKI (109 aa).

It belongs to the EF-1-beta/EF-1-delta family. EF-1 is composed of 4 subunits: alpha, beta, delta isoform 1, and gamma. Isoform 2 interacts with HSF1 and NFE2L2.

Its subcellular location is the nucleus. Functionally, EF-1-beta and EF-1-delta stimulate the exchange of GDP bound to EF-1-alpha to GTP, regenerating EF-1-alpha for another round of transfer of aminoacyl-tRNAs to the ribosome. In terms of biological role, regulates induction of heat-shock-responsive genes through association with heat shock transcription factors and direct DNA-binding at heat shock promoter elements (HSE). The polypeptide is Elongation factor 1-delta (Eef1d) (Rattus norvegicus (Rat)).